A 234-amino-acid chain; its full sequence is N-(5'-phosphoribosyl)anthranilate isomerase 1 (234 aa).

The protein belongs to the TrpF family.

It catalyses the reaction N-(5-phospho-beta-D-ribosyl)anthranilate = 1-(2-carboxyphenylamino)-1-deoxy-D-ribulose 5-phosphate. It functions in the pathway amino-acid biosynthesis; L-tryptophan biosynthesis; L-tryptophan from chorismate: step 3/5. The polypeptide is N-(5'-phosphoribosyl)anthranilate isomerase 1 (trpF1) (Methanosarcina mazei (strain ATCC BAA-159 / DSM 3647 / Goe1 / Go1 / JCM 11833 / OCM 88) (Methanosarcina frisia)).